Reading from the N-terminus, the 508-residue chain is Photosystem II CP47 reaction center protein (508 aa).

Transmembrane regions (helical) follow at residues 21–36, 101–115, 140–156, 203–218, 237–252, and 457–472; these read AVHIMHTALVSGWAGS, IVFSGLCFLAAIWHW, GIHLFLAGVACFGFGAF, IAAGTLGILAGLFHLS, VLSSSIAAVFFAAFVV, and TFALLFFFGHIWHGAR.

Belongs to the PsbB/PsbC family. PsbB subfamily. As to quaternary structure, PSII is composed of 1 copy each of membrane proteins PsbA, PsbB, PsbC, PsbD, PsbE, PsbF, PsbH, PsbI, PsbJ, PsbK, PsbL, PsbM, PsbT, PsbX, PsbY, PsbZ, Psb30/Ycf12, at least 3 peripheral proteins of the oxygen-evolving complex and a large number of cofactors. It forms dimeric complexes. Requires Binds multiple chlorophylls. PSII binds additional chlorophylls, carotenoids and specific lipids. as cofactor.

The protein resides in the plastid. The protein localises to the chloroplast thylakoid membrane. One of the components of the core complex of photosystem II (PSII). It binds chlorophyll and helps catalyze the primary light-induced photochemical processes of PSII. PSII is a light-driven water:plastoquinone oxidoreductase, using light energy to abstract electrons from H(2)O, generating O(2) and a proton gradient subsequently used for ATP formation. In Lolium perenne (Perennial ryegrass), this protein is Photosystem II CP47 reaction center protein.